The chain runs to 84 residues: U4-theraphotoxin-Hhn1a (84 aa).

The signal sequence occupies residues 1–22 (MKVTLIAILTCAAVLVLHTTAA). A propeptide spanning residues 23 to 47 (EELEESQLMEVGMPDTELAAVDGER) is cleaved from the precursor. 3 disulfide bridges follow: Cys51/Cys65, Cys55/Cys76, and Cys70/Cys81.

Belongs to the neurotoxin 12 (Hwtx-2) family. 02 (Hwtx-2) subfamily. Expressed by the venom gland.

The protein resides in the secreted. Functionally, postsynaptic neurotoxin. The protein is U4-theraphotoxin-Hhn1a of Cyriopagopus hainanus (Chinese bird spider).